The chain runs to 317 residues: Transaldolase (317 aa).

Lysine 132 serves as the catalytic Schiff-base intermediate with substrate.

It belongs to the transaldolase family. Type 1 subfamily. As to quaternary structure, homodimer.

The protein resides in the cytoplasm. It carries out the reaction D-sedoheptulose 7-phosphate + D-glyceraldehyde 3-phosphate = D-erythrose 4-phosphate + beta-D-fructose 6-phosphate. The protein operates within carbohydrate degradation; pentose phosphate pathway; D-glyceraldehyde 3-phosphate and beta-D-fructose 6-phosphate from D-ribose 5-phosphate and D-xylulose 5-phosphate (non-oxidative stage): step 2/3. Functionally, transaldolase is important for the balance of metabolites in the pentose-phosphate pathway. This is Transaldolase from Actinobacillus succinogenes (strain ATCC 55618 / DSM 22257 / CCUG 43843 / 130Z).